We begin with the raw amino-acid sequence, 343 residues long: Protein RecA (343 aa).

An ATP-binding site is contributed by glycine 64 to threonine 71.

It belongs to the RecA family.

It is found in the cytoplasm. Its function is as follows. Can catalyze the hydrolysis of ATP in the presence of single-stranded DNA, the ATP-dependent uptake of single-stranded DNA by duplex DNA, and the ATP-dependent hybridization of homologous single-stranded DNAs. It interacts with LexA causing its activation and leading to its autocatalytic cleavage. The sequence is that of Protein RecA from Cereibacter sphaeroides (strain ATCC 17023 / DSM 158 / JCM 6121 / CCUG 31486 / LMG 2827 / NBRC 12203 / NCIMB 8253 / ATH 2.4.1.) (Rhodobacter sphaeroides).